We begin with the raw amino-acid sequence, 149 residues long: Transcription antitermination protein NusB (149 aa).

Belongs to the NusB family.

Functionally, involved in transcription antitermination. Required for transcription of ribosomal RNA (rRNA) genes. Binds specifically to the boxA antiterminator sequence of the ribosomal RNA (rrn) operons. This chain is Transcription antitermination protein NusB, found in Hahella chejuensis (strain KCTC 2396).